Here is a 127-residue protein sequence, read N- to C-terminus: Small ribosomal subunit protein eS8 (127 aa).

The disordered stretch occupies residues 1 to 25; sequence MTIFQGKSGKKPTGGNLKQAKKKRR.

The protein belongs to the eukaryotic ribosomal protein eS8 family. In terms of assembly, part of the 30S ribosomal subunit.

In Thermoplasma volcanium (strain ATCC 51530 / DSM 4299 / JCM 9571 / NBRC 15438 / GSS1), this protein is Small ribosomal subunit protein eS8.